We begin with the raw amino-acid sequence, 554 residues long: Cytochrome P450 monooxygenase himC (554 aa).

A helical membrane pass occupies residues 52–72 (YSVASVAIAGFTALVVSVALY). Residues asparagine 110, asparagine 328, asparagine 414, and asparagine 425 are each glycosylated (N-linked (GlcNAc...) asparagine). Residue cysteine 501 coordinates heme.

This sequence belongs to the cytochrome P450 family. Heme is required as a cofactor.

It is found in the membrane. It participates in secondary metabolite biosynthesis. Cytochrome P450 monooxygenase; part of the him gene cluster that mediates the biosynthesis of himeic acid A, a ubiquitin-activating enzyme (E1) inhibitor. First, himA, together with the trans-enoyl reductase himH, catalyzes the formation of apolyketide chain, which is then condensed with leucine by the NRPS activity of himA. Dieckmann cyclization and release from himA gives a tetramic acid intermediate as the product of himA PKS-NRPS. HimG then catalyzes alpha-oxidation of the tetramic acid ring, with a subsequent rearrangement to yield apyrone intermediate. Two terminal methyl groups of polyketide and amide side chains are oxidized to carboxylic acids by himC cytochrome P450 monooxygenase to form himeic acid A. Himeic acid A is further converted to himeic acid B and C during culture growth. No gene responsible for pyrone to pyridone conversion was found in the him gene cluster and himeic acid A is non-enzymatically converted to himeic acid C by the incorporation of an ammonium nitrogen atom in a pH5 buffer, and to himeic acid B at a conversion ratio of 50% during incubation in MeOH for 5 days. This is Cytochrome P450 monooxygenase himC from Aspergillus japonicus.